The chain runs to 374 residues: Cytochrome b (374 aa).

4 helical membrane passes run 25 to 45 (FGSM…FLAI), 69 to 90 (WIIQ…YMHI), 105 to 125 (WLSG…GYVL), and 170 to 190 (FFAL…IHII). Residues histidine 75 and histidine 89 each contribute to the heme b site. Residues histidine 174 and histidine 188 each coordinate heme b. Histidine 193 is a binding site for a ubiquinone. A run of 4 helical transmembrane segments spans residues 218–238 (YKDM…LSFT), 280–300 (LGGA…PFTH), 312–332 (LAQI…WTAT), and 339–358 (FITI…MINP).

This sequence belongs to the cytochrome b family. The cytochrome bc1 complex contains 3 respiratory subunits (MT-CYB, CYC1 and UQCRFS1), 2 core proteins (UQCRC1 and UQCRC2) and probably 6 low-molecular weight proteins. The cofactor is heme b.

The protein localises to the mitochondrion inner membrane. Component of the ubiquinol-cytochrome c reductase complex (complex III or cytochrome b-c1 complex) that is part of the mitochondrial respiratory chain. The b-c1 complex mediates electron transfer from ubiquinol to cytochrome c. Contributes to the generation of a proton gradient across the mitochondrial membrane that is then used for ATP synthesis. This chain is Cytochrome b (MT-CYB), found in Calliophis bivirgatus (Blue Malaysian coral snake).